A 423-amino-acid chain; its full sequence is 3-phosphoshikimate 1-carboxyvinyltransferase (423 aa).

Positions 20, 21, and 25 each coordinate 3-phosphoshikimate. Lysine 20 contacts phosphoenolpyruvate. Residues glycine 91 and arginine 119 each contribute to the phosphoenolpyruvate site. The 3-phosphoshikimate site is built by threonine 163, serine 164, glutamine 165, aspartate 305, glutamine 328, and lysine 332. Glutamine 165 is a binding site for phosphoenolpyruvate. Aspartate 305 (proton acceptor) is an active-site residue. Phosphoenolpyruvate is bound by residues arginine 336 and arginine 377.

This sequence belongs to the EPSP synthase family. As to quaternary structure, monomer.

It is found in the cytoplasm. The enzyme catalyses 3-phosphoshikimate + phosphoenolpyruvate = 5-O-(1-carboxyvinyl)-3-phosphoshikimate + phosphate. The protein operates within metabolic intermediate biosynthesis; chorismate biosynthesis; chorismate from D-erythrose 4-phosphate and phosphoenolpyruvate: step 6/7. Functionally, catalyzes the transfer of the enolpyruvyl moiety of phosphoenolpyruvate (PEP) to the 5-hydroxyl of shikimate-3-phosphate (S3P) to produce enolpyruvyl shikimate-3-phosphate and inorganic phosphate. The chain is 3-phosphoshikimate 1-carboxyvinyltransferase from Acetivibrio thermocellus (strain ATCC 27405 / DSM 1237 / JCM 9322 / NBRC 103400 / NCIMB 10682 / NRRL B-4536 / VPI 7372) (Clostridium thermocellum).